The sequence spans 275 residues: Phosphonoacetaldehyde hydrolase (275 aa).

The Nucleophile role is filled by Asp15. 2 residues coordinate Mg(2+): Asp15 and Ala17. Lys56 serves as the catalytic Schiff-base intermediate with substrate. Asp189 provides a ligand contact to Mg(2+).

Belongs to the HAD-like hydrolase superfamily. PhnX family. As to quaternary structure, homodimer. It depends on Mg(2+) as a cofactor.

The enzyme catalyses phosphonoacetaldehyde + H2O = acetaldehyde + phosphate + H(+). Its function is as follows. Involved in phosphonate degradation. This is Phosphonoacetaldehyde hydrolase from Pseudomonas putida (Arthrobacter siderocapsulatus).